Reading from the N-terminus, the 68-residue chain is Conotoxin TsMMSK-021 (68 aa).

Positions 1-20 (MMSKLGVLLTICLLLFPLTA) are cleaved as a signal peptide. Positions 21–52 (VRLDGDQHTDRPADRMQDIATEQHPLFDPVKR) are excised as a propeptide. 3 cysteine pairs are disulfide-bonded: Cys-53–Cys-66, Cys-54–Cys-62, and Cys-58–Cys-65. Pro-64 carries the post-translational modification 4-hydroxyproline.

It belongs to the conotoxin M superfamily. Expressed by the venom duct.

Its subcellular location is the secreted. This is Conotoxin TsMMSK-021 from Conus tessulatus (Tessellate cone).